Reading from the N-terminus, the 544-residue chain is Chaperonin GroEL (544 aa).

Residues 30–33, Lys51, 87–91, Gly415, 481–483, and Asp497 contribute to the ATP site; these read TLGP, DGTTT, and DAL.

It belongs to the chaperonin (HSP60) family. In terms of assembly, forms a cylinder of 14 subunits composed of two heptameric rings stacked back-to-back. Interacts with the co-chaperonin GroES.

It is found in the cytoplasm. The catalysed reaction is ATP + H2O + a folded polypeptide = ADP + phosphate + an unfolded polypeptide.. Functionally, together with its co-chaperonin GroES, plays an essential role in assisting protein folding. The GroEL-GroES system forms a nano-cage that allows encapsulation of the non-native substrate proteins and provides a physical environment optimized to promote and accelerate protein folding. The chain is Chaperonin GroEL from Chlamydia trachomatis serovar A (strain ATCC VR-571B / DSM 19440 / HAR-13).